The chain runs to 183 residues: Putative 3-methyladenine DNA glycosylase (183 aa).

The protein belongs to the DNA glycosylase MPG family.

This Legionella pneumophila (strain Corby) protein is Putative 3-methyladenine DNA glycosylase.